Consider the following 464-residue polypeptide: Chitotriosidase-1 (464 aa).

Residues 1-21 (MVQSLAWAGVMTLLMVQWGSA) form the signal peptide. The 365-residue stretch at 22-386 (AKLVCYLTNW…RTLRQELNLP (365 aa)) folds into the GH18 domain. Residues cysteine 26 and cysteine 51 are joined by a disulfide bond. Residues 70–71 (EH) and 97–100 (GGWT) contribute to the chitin site. The active-site Proton donor is glutamate 140. 210-213 (MAYD) is a binding site for chitin. A disulfide bond links cysteine 307 and cysteine 368. Positions 385–416 (LPSETPRSPEQIIPEPRPSSMPEQGPSPGLDN) are disordered. Residues 415–464 (DNFCQGKADGVYPNPGDESTYYNCGGGRLFQQSCPPGLVFRASCKCCTWS) form the Chitin-binding type-2 domain. Cysteine 448 and cysteine 461 are disulfide-bonded.

Belongs to the glycosyl hydrolase 18 family. Chitinase class II subfamily. As to quaternary structure, monomer. Highly expressed in tongue, stomach, kidney, brain, skin, testis, and bone marrow. Low level of expression was found in lung, heart, spleen, small intestine, and liver. Not detectable in pancreas, salivary gland, large intestine, uterus, or peripheral blood mononuclear cells (PBMC).

The protein localises to the secreted. The protein resides in the lysosome. It carries out the reaction Random endo-hydrolysis of N-acetyl-beta-D-glucosaminide (1-&gt;4)-beta-linkages in chitin and chitodextrins.. Degrades chitin, chitotriose and chitobiose. May participate in the defense against nematodes and other pathogens. This is Chitotriosidase-1 (Chit1) from Mus musculus (Mouse).